A 336-amino-acid chain; its full sequence is Electron transfer flavoprotein subunit alpha (336 aa).

275 to 303 (LYIACGISGAIQHLAGMQDSDYIIAINKD) lines the FAD pocket.

It belongs to the ETF alpha-subunit/FixB family. Heterodimer of an alpha and a beta subunit. Requires FAD as cofactor.

In terms of biological role, the electron transfer flavoprotein serves as a specific electron acceptor for other dehydrogenases. It transfers the electrons to the main respiratory chain via ETF-ubiquinone oxidoreductase (ETF dehydrogenase). The sequence is that of Electron transfer flavoprotein subunit alpha (etfA) from Clostridium acetobutylicum (strain ATCC 824 / DSM 792 / JCM 1419 / IAM 19013 / LMG 5710 / NBRC 13948 / NRRL B-527 / VKM B-1787 / 2291 / W).